The primary structure comprises 145 residues: NADH-quinone oxidoreductase subunit A (145 aa).

A run of 3 helical transmembrane segments spans residues 14–34 (FAVFLIVSIGLCCLMLAGAWF), 66–86 (FYLVAMFFVIFDVEALYLYAW), and 96–116 (VGFVEAAIFILVLLAGLFYLV).

Belongs to the complex I subunit 3 family. NDH-1 is composed of 13 different subunits. Subunits NuoA, H, J, K, L, M, N constitute the membrane sector of the complex.

Its subcellular location is the cell inner membrane. It catalyses the reaction a quinone + NADH + 5 H(+)(in) = a quinol + NAD(+) + 4 H(+)(out). Functionally, NDH-1 shuttles electrons from NADH, via FMN and iron-sulfur (Fe-S) centers, to quinones in the respiratory chain. The immediate electron acceptor for the enzyme in this species is believed to be ubiquinone. Couples the redox reaction to proton translocation (for every two electrons transferred, four hydrogen ions are translocated across the cytoplasmic membrane), and thus conserves the redox energy in a proton gradient. This chain is NADH-quinone oxidoreductase subunit A, found in Erwinia tasmaniensis (strain DSM 17950 / CFBP 7177 / CIP 109463 / NCPPB 4357 / Et1/99).